Here is a 181-residue protein sequence, read N- to C-terminus: Small ribosomal subunit protein uS4 (181 aa).

In terms of domain architecture, S4 RNA-binding spans 104–172 (RRLQTIVYKK…SRPPVMSQQE (69 aa)).

This sequence belongs to the universal ribosomal protein uS4 family. As to quaternary structure, part of the 30S ribosomal subunit. Contacts protein S5. The interaction surface between S4 and S5 is involved in control of translational fidelity.

In terms of biological role, one of the primary rRNA binding proteins, it binds directly to 16S rRNA where it nucleates assembly of the body of the 30S subunit. Its function is as follows. With S5 and S12 plays an important role in translational accuracy. In Saccharolobus solfataricus (strain ATCC 35092 / DSM 1617 / JCM 11322 / P2) (Sulfolobus solfataricus), this protein is Small ribosomal subunit protein uS4.